Here is a 361-residue protein sequence, read N- to C-terminus: MMDSPKKLGYHMPAEYEPHHGTLMIWPTRPGSWPFQGKAAKRAFTQIIETIAEGERVYLLVEQAYLSEAQSYLGDKVVYLDIPTNDAWARDTGPTILVNDKGKKLAVDWAFNAWGGTYDGLYQDYEEDDQVASRFAEALERPVYDAKPFVLEGGAIHSDGQGTILVTESCLLSPGRNPNLTKEEIENTLLESLGAEKVIWLPYGIYQDETNEHVDNVVAFVGPAEVVLAWTDDENDPQYAMSKADLELLEQETDAKGCHFTIHKLPIPAVRQVVTEEDLPGYIYEEGEEERYAGERLAASYVNFYIANKAVLVPQFEDVNDQVALDILSKCFPDRKVVGIPARDILLGGGNIHCITQQIPE.

The active-site Amidino-cysteine intermediate is C354.

Belongs to the agmatine deiminase family.

The enzyme catalyses agmatine + H2O = N-carbamoylputrescine + NH4(+). This is Putative agmatine deiminase from Streptococcus pneumoniae (strain ATCC 700669 / Spain 23F-1).